The sequence spans 335 residues: tRNA N6-adenosine threonylcarbamoyltransferase (335 aa).

The Fe cation site is built by H110 and H114. Substrate contacts are provided by residues L132 to G136, D165, G178, and N271. D299 lines the Fe cation pocket.

This sequence belongs to the KAE1 / TsaD family. The cofactor is Fe(2+).

It is found in the cytoplasm. The catalysed reaction is L-threonylcarbamoyladenylate + adenosine(37) in tRNA = N(6)-L-threonylcarbamoyladenosine(37) in tRNA + AMP + H(+). Required for the formation of a threonylcarbamoyl group on adenosine at position 37 (t(6)A37) in tRNAs that read codons beginning with adenine. Is involved in the transfer of the threonylcarbamoyl moiety of threonylcarbamoyl-AMP (TC-AMP) to the N6 group of A37, together with TsaE and TsaB. TsaD likely plays a direct catalytic role in this reaction. This chain is tRNA N6-adenosine threonylcarbamoyltransferase, found in Campylobacter jejuni subsp. jejuni serotype O:6 (strain 81116 / NCTC 11828).